A 231-amino-acid chain; its full sequence is Ribosyldihydronicotinamide dehydrogenase [quinone] (231 aa).

Residues His-12, 18–21, and 104–107 each bind FAD; these read FNGS and LYWF. 127–129 provides a ligand contact to substrate; the sequence is FDI. FAD contacts are provided by residues 148–151 and Tyr-156; that span reads TTGG. Zn(2+) contacts are provided by His-174 and His-178. FAD is bound at residue Asp-194. Ser-197 is modified (phosphoserine). Arg-201 is a binding site for FAD. Cys-223 is a Zn(2+) binding site.

It belongs to the NAD(P)H dehydrogenase (quinone) family. In terms of assembly, homodimer. It depends on Zn(2+) as a cofactor. The cofactor is FAD.

The protein localises to the cytoplasm. It catalyses the reaction 1-(beta-D-ribofuranosyl)-1,4-dihydronicotinamide + a quinone + H(+) = beta-nicotinamide D-riboside + a quinol. Functionally, the enzyme apparently serves as a quinone reductase in connection with conjugation reactions of hydroquinones involved in detoxification pathways as well as in biosynthetic processes such as the vitamin K-dependent gamma-carboxylation of glutamate residues in prothrombin synthesis. The sequence is that of Ribosyldihydronicotinamide dehydrogenase [quinone] (Nqo2) from Mus musculus (Mouse).